The primary structure comprises 58 residues: Large ribosomal subunit protein bL32 (58 aa).

It belongs to the bacterial ribosomal protein bL32 family.

The chain is Large ribosomal subunit protein bL32 from Sulfurihydrogenibium sp. (strain YO3AOP1).